The primary structure comprises 216 residues: Adenylate kinase (216 aa).

10 to 15 contributes to the ATP binding site; the sequence is GAGKGT. An NMP region spans residues 30-59; sequence STGDMLRAAVSAQTEVGKRAKAVMDAGKLV. AMP contacts are provided by residues T31, R36, 57-59, 85-88, and Q92; these read KLV and GFPR. Residues 126–163 are LID; that stretch reads GRYTCANCGTGYHDENLKPKVEGVCDKCGSTHFKRRPD. R127 is an ATP binding site. Residues C130, C133, C150, and C153 each contribute to the Zn(2+) site. AMP contacts are provided by R160 and R172. A200 contacts ATP.

Belongs to the adenylate kinase family. As to quaternary structure, monomer.

The protein localises to the cytoplasm. The catalysed reaction is AMP + ATP = 2 ADP. The protein operates within purine metabolism; AMP biosynthesis via salvage pathway; AMP from ADP: step 1/1. Catalyzes the reversible transfer of the terminal phosphate group between ATP and AMP. Plays an important role in cellular energy homeostasis and in adenine nucleotide metabolism. The polypeptide is Adenylate kinase (Allorhizobium ampelinum (strain ATCC BAA-846 / DSM 112012 / S4) (Agrobacterium vitis (strain S4))).